The primary structure comprises 83 residues: Putative membrane protein insertion efficiency factor (83 aa).

This sequence belongs to the UPF0161 family.

It localises to the cell membrane. Could be involved in insertion of integral membrane proteins into the membrane. This chain is Putative membrane protein insertion efficiency factor, found in Streptococcus thermophilus (strain ATCC BAA-250 / LMG 18311).